We begin with the raw amino-acid sequence, 182 residues long: Protein LURP-one-related 7 (182 aa).

The protein belongs to the LOR family.

In terms of biological role, might be related to the phospholipid scramblase and tubby-like superfamily of membrane tethered transcription factors. In Arabidopsis thaliana (Mouse-ear cress), this protein is Protein LURP-one-related 7.